A 495-amino-acid chain; its full sequence is 3-octaprenyl-4-hydroxybenzoate carboxy-lyase (495 aa).

N172 lines the Mn(2+) pocket. Residues 175–177, 189–191, and 194–195 each bind prenylated FMN; these read IYR, RWL, and RG. Residue E238 coordinates Mn(2+). D287 acts as the Proton donor in catalysis.

Belongs to the UbiD family. As to quaternary structure, homohexamer. Requires prenylated FMN as cofactor. Mn(2+) is required as a cofactor.

The protein localises to the cell membrane. It catalyses the reaction a 4-hydroxy-3-(all-trans-polyprenyl)benzoate + H(+) = a 2-(all-trans-polyprenyl)phenol + CO2. The protein operates within cofactor biosynthesis; ubiquinone biosynthesis. Functionally, catalyzes the decarboxylation of 3-octaprenyl-4-hydroxy benzoate to 2-octaprenylphenol, an intermediate step in ubiquinone biosynthesis. The sequence is that of 3-octaprenyl-4-hydroxybenzoate carboxy-lyase from Edwardsiella ictaluri (strain 93-146).